The following is a 305-amino-acid chain: Protoheme IX farnesyltransferase (305 aa).

9 helical membrane passes run 29–49, 55–75, 101–121, 123–143, 151–171, 177–197, 219–241, 246–268, and 283–303; these read LIVF…PGLA, LWAT…NCLI, ALIF…EAVN, LTAW…TVVL, IVIG…AMTG, GLIL…ALAL, FTRL…PFVQ, WLYL…RLWR, and IWHL…QDLL.

The protein belongs to the UbiA prenyltransferase family. Protoheme IX farnesyltransferase subfamily.

It localises to the cell inner membrane. The enzyme catalyses heme b + (2E,6E)-farnesyl diphosphate + H2O = Fe(II)-heme o + diphosphate. Its pathway is porphyrin-containing compound metabolism; heme O biosynthesis; heme O from protoheme: step 1/1. In terms of biological role, converts heme B (protoheme IX) to heme O by substitution of the vinyl group on carbon 2 of heme B porphyrin ring with a hydroxyethyl farnesyl side group. In Leptothrix cholodnii (strain ATCC 51168 / LMG 8142 / SP-6) (Leptothrix discophora (strain SP-6)), this protein is Protoheme IX farnesyltransferase.